The following is a 60-amino-acid chain: Large ribosomal subunit protein uL30 (60 aa).

This sequence belongs to the universal ribosomal protein uL30 family. As to quaternary structure, part of the 50S ribosomal subunit.

The sequence is that of Large ribosomal subunit protein uL30 from Streptomyces filamentosus (Streptomyces roseosporus).